The sequence spans 209 residues: Lysine-rich arabinogalactan protein 18 (209 aa).

Positions 1-21 (MDRNFLLTVTLICIVVAGVGG) are cleaved as a signal peptide. The segment at 21-185 (GQSPISSPTK…PSADDQSGAA (165 aa)) is disordered. Positions 23 to 79 (SPISSPTKSPTTPSAPTTSPTKSPAVTSPTTAPAKTPTASASSPVESPKSPAPVSES) are enriched in low complexity. Composition is skewed to pro residues over residues 80 to 95 (SPPPTPVPESSPPVPA) and 103 to 119 (SSPPVPAPVADSPPAPV). Residues 132–145 (SKHKKTTKKSKKHQ) show a composition bias toward basic residues. Pro residues predominate over residues 149-164 (APAPELLGPPAPPTES). Glycine 183 is lipidated: GPI-anchor amidated glycine. Residues 184–209 (AASTRVLRNVAVGAVATAWAVLVMAF) constitute a propeptide, removed in mature form.

This sequence belongs to the lysine-rich AGP family. In terms of processing, O-glycosylated on the hydroxyproline residues. As to expression, predominantly expressed in flowers, and moderately expressed in roots, stems and young leaves.

Its subcellular location is the cell membrane. In terms of biological role, proteoglycan that seems to be implicated in diverse developmental roles such as differentiation, cell-cell recognition, embryogenesis and programmed cell death. The protein is Lysine-rich arabinogalactan protein 18 (AGP18) of Arabidopsis thaliana (Mouse-ear cress).